Reading from the N-terminus, the 150-residue chain is AN1-type zinc finger protein TMC1 (150 aa).

A disordered region spans residues 1 to 82 (MSDINEIEIP…TKKTTKKKKK (82 aa)). At serine 2 the chain carries N-acetylserine. Residues 23–33 (DPMHEIEDKST) are compositionally biased toward basic and acidic residues. 2 positions are modified to phosphoserine: serine 43 and serine 54. Positions 53 to 70 (NSRSSSNSSVTSTGQSSR) are enriched in low complexity. Basic residues predominate over residues 71-82 (RVTKKTTKKKKK). The segment at 79 to 128 (KKKKNACYFDTCSSAASKFIGDCNFCKGHFCSKHRLMENHACNGLTSCKE) adopts an AN1-type zinc-finger fold. Positions 85, 90, 101, 104, 109, 112, 118, and 120 each coordinate Zn(2+).

It is found in the nucleus. In terms of biological role, may have a role in protecting cells from metalloid-induced proteotoxicity. This chain is AN1-type zinc finger protein TMC1, found in Saccharomyces cerevisiae (strain ATCC 204508 / S288c) (Baker's yeast).